The primary structure comprises 393 residues: Outer membrane protein assembly factor BamB (393 aa).

Positions 1 to 19 (MQLRKTLLVGLVSVALLSG) are cleaved as a signal peptide. A lipid anchor (N-palmitoyl cysteine) is attached at cysteine 20. Residue cysteine 20 is the site of S-diacylglycerol cysteine attachment.

This sequence belongs to the BamB family. In terms of assembly, part of the Bam complex, which is composed of the outer membrane protein BamA, and four lipoproteins BamB, BamC, BamD and BamE.

The protein resides in the cell outer membrane. Its function is as follows. Part of the outer membrane protein assembly complex, which is involved in assembly and insertion of beta-barrel proteins into the outer membrane. The protein is Outer membrane protein assembly factor BamB of Yersinia pestis.